A 746-amino-acid chain; its full sequence is Ferrienterobactin receptor (746 aa).

The N-terminal stretch at 1–22 is a signal peptide; that stretch reads MNKKIHSLALLVNLGIYGVAQA. A TonB box motif is present at residues 34-41; sequence DTIVVTAA. The TBDR plug domain maps to 42–169; the sequence is EQNLQAPGVS…AGGVVNIITK (128 aa). The interval 76–96 is disordered; that stretch reads GVNLTGNSTSGQRGNNRQIDI. The segment covering 79–93 has biased composition (polar residues); that stretch reads LTGNSTSGQRGNNRQ. Residues 174 to 746 enclose the TBDR beta-barrel domain; that stretch reads EWHGSWDAYF…TWYMSVNTHF (573 aa). Residues 729–746 carry the TonB C-terminal box motif; the sequence is YTYNEPGRTWYMSVNTHF.

Belongs to the TonB-dependent receptor family.

The protein localises to the cell outer membrane. In terms of biological role, this protein is involved in the initial step of iron uptake by binding ferrienterobactin (Fe-ENT), an iron chelatin siderophore that allows E.coli to extract iron from the environment. FepA also acts as a receptor for colicins B and D. This Escherichia coli (strain K12) protein is Ferrienterobactin receptor (fepA).